The chain runs to 321 residues: Aldose reductase C (321 aa).

An NADP(+)-binding site is contributed by 22-31; the sequence is GNQIPSIGLG. Tyrosine 62 acts as the Proton donor in catalysis. Histidine 124 lines the substrate pocket. 227–281 lines the NADP(+) pocket; that stretch reads SPLGQGKCDFFSNKILKSIAGKYKKSVANVIFKWLNQRGIAAIPKSGNHSRIIEN.

Belongs to the aldo/keto reductase family.

The catalysed reaction is an alditol + NAD(+) = an aldose + NADH + H(+). It catalyses the reaction an alditol + NADP(+) = an aldose + NADPH + H(+). Functionally, catalyzes the NADPH-dependent reduction of a wide variety of carbonyl-containing compounds to their corresponding alcohols with a broad range of catalytic efficiencies. The polypeptide is Aldose reductase C (alrC) (Dictyostelium discoideum (Social amoeba)).